Reading from the N-terminus, the 376-residue chain is MTQRFSFTRLGQDGAARLGRINTPRGEIRTPAFMPVGTAATVKAMRPESVRETGADILLGNTYHLMLRPTAERIARLGGLHRFMNWDRPILTDSGGFQVMSLTGLRKLTEQGVTFKSHIDGSKHMLSPERSMEIQKLLRSDIVMCFDECPALPAPRERITESMELSMRWAARSREAFGDWPGHALFGIQQGGLEEDLRGKSAEALRAIEFDGYAVGGLAVGEGQEAMFGVLDYAPGMLPEDKPRYLMGVGKPGDLVGAVKRGIDMFDCVLPSRSGRTGQVFTRRGVVNIKNARHADDPRPLDEDCTCPACRSYSRAYLHHVFRAGEILSSMLLTWHNLHYYQELMQGMRDAIGAGDFAGFEARFLAQQAEGDIAPV.

Aspartate 93 serves as the catalytic Proton acceptor. Substrate is bound by residues 93–97 (DSGGF), aspartate 147, glutamine 190, and glycine 217. Residues 248 to 254 (GVGKPGD) form an RNA binding region. Aspartate 267 serves as the catalytic Nucleophile. Zn(2+) is bound by residues cysteine 305, cysteine 307, cysteine 310, and histidine 336.

This sequence belongs to the queuine tRNA-ribosyltransferase family. Homodimer. Within each dimer, one monomer is responsible for RNA recognition and catalysis, while the other monomer binds to the replacement base PreQ1. Requires Zn(2+) as cofactor.

It catalyses the reaction 7-aminomethyl-7-carbaguanine + guanosine(34) in tRNA = 7-aminomethyl-7-carbaguanosine(34) in tRNA + guanine. The protein operates within tRNA modification; tRNA-queuosine biosynthesis. Functionally, catalyzes the base-exchange of a guanine (G) residue with the queuine precursor 7-aminomethyl-7-deazaguanine (PreQ1) at position 34 (anticodon wobble position) in tRNAs with GU(N) anticodons (tRNA-Asp, -Asn, -His and -Tyr). Catalysis occurs through a double-displacement mechanism. The nucleophile active site attacks the C1' of nucleotide 34 to detach the guanine base from the RNA, forming a covalent enzyme-RNA intermediate. The proton acceptor active site deprotonates the incoming PreQ1, allowing a nucleophilic attack on the C1' of the ribose to form the product. After dissociation, two additional enzymatic reactions on the tRNA convert PreQ1 to queuine (Q), resulting in the hypermodified nucleoside queuosine (7-(((4,5-cis-dihydroxy-2-cyclopenten-1-yl)amino)methyl)-7-deazaguanosine). This Dinoroseobacter shibae (strain DSM 16493 / NCIMB 14021 / DFL 12) protein is Queuine tRNA-ribosyltransferase.